The following is a 358-amino-acid chain: COP9 signalosome complex subunit 5b (358 aa).

Methionine 1 carries the post-translational modification N-acetylmethionine. In terms of domain architecture, MPN spans 59-196 (VKISALALLK…IGAFRTYSKG (138 aa)). Zn(2+) is bound by residues histidine 142, histidine 144, and aspartate 155. The short motif at 142–155 (HSHPGYGCWLSGID) is the JAMM motif element. Positions 338–349 (MRQSNNKSPTDS) are enriched in polar residues. The segment at 338 to 358 (MRQSNNKSPTDSSDPDPMITY) is disordered.

Belongs to the peptidase M67A family. CSN5 subfamily. As to quaternary structure, component of the CSN complex, probably composed of CSN1, CSN2, CSN3, CSN4, CSN5 (CSN5A or CSN5B), CSN6 (CSN6A or CSN6B), CSN7 and CSN8. CSN5A or CSN5B are present within distinct CSN complexes each containing only one copy of CSN5. Interacts with itself. In the complex, it is located in the center and probably interacts directly with CSN4 and CSN6A or CSN6B. Also exists as monomeric form. Interacts with CYT1 in vitro and in planta. Interacts with FLZ3. Requires a divalent metal cation as cofactor. In terms of tissue distribution, ubiquitously expressed. Highly expressed in flowers and roots. Expressed at lower level in seedlings and siliques.

It localises to the cytoplasm. The protein localises to the nucleus. In terms of biological role, probable protease subunit of the COP9 signalosome complex (CSN), a complex involved in various cellular and developmental processes such as photomorphogenesis and auxin and jasmonate responses. The CSN complex is an essential regulator of the ubiquitin (Ubl) conjugation pathway by mediating the deneddylation of the cullin subunits of the SCF-type E3 ligase complexes, leading to decrease the Ubl ligase activity of SCF. In the complex, it probably acts as the catalytic center that mediates the cleavage of Nedd8 from cullins. It however has no metalloprotease activity by itself and requires the other subunits of the CSN complex. The CSN complex is involved in repression of photomorphogenesis in darkness by regulating the activity of COP1-containing Ubl ligase complexes. The complex is also required for degradation of PSIAA6 by regulating the activity of the Ubl ligase SCF-TIR complex. Not involved in CSN's deneddylation/derubylation activity. Essential for the structural integrity of the CSN holocomplex. This Arabidopsis thaliana (Mouse-ear cress) protein is COP9 signalosome complex subunit 5b.